A 265-amino-acid polypeptide reads, in one-letter code: tRNA (guanine-N(1)-)-methyltransferase (265 aa).

S-adenosyl-L-methionine-binding positions include G119 and 139 to 144; that span reads IGDYVL.

This sequence belongs to the RNA methyltransferase TrmD family. In terms of assembly, homodimer.

The protein resides in the cytoplasm. The catalysed reaction is guanosine(37) in tRNA + S-adenosyl-L-methionine = N(1)-methylguanosine(37) in tRNA + S-adenosyl-L-homocysteine + H(+). In terms of biological role, specifically methylates guanosine-37 in various tRNAs. This Alcanivorax borkumensis (strain ATCC 700651 / DSM 11573 / NCIMB 13689 / SK2) protein is tRNA (guanine-N(1)-)-methyltransferase.